Here is a 413-residue protein sequence, read N- to C-terminus: MARKKHRKLFPTLASETNKTLDCSNGVCDPICPYNCYPEPDYYTISPQLPPWSSSPQPSPCPSPSISAVYLPSQDSSSSLDAISIITITGAVLAILLTGFFLVAKFFSDSVNRVNQGTYQSDNEDNDTVMEEEFQDREQVDHPIWLIRTTGLQQSIINSITICNYKRGDGLIERTDCPVCLNEFEEDESLRLLPKCNHAFHISCIDTWLSSHTNCPLCRAGIAMISVTTPRYSGPVEVTPGGSGSHLENDGVDEEDHGEIENRVDSDFKESDDSDIRIEIYRFDSDGDGSETETKERVRVLKECMDPNGGDSVNSLSHTKTHVESVDFPGKSCENQSEEFTRHNGEDEASCSEENGGGSNQLRRSCDSGELNGETTGDEGKSQSDISSSTLKTNGSSSSVSCFNKNKSSVFPL.

The chain crosses the membrane as a helical span at residues 83–103; that stretch reads ISIITITGAVLAILLTGFFLV. The RING-type; atypical zinc finger occupies 177–219; that stretch reads CPVCLNEFEEDESLRLLPKCNHAFHISCIDTWLSSHTNCPLCR. 2 disordered regions span residues 238-258 and 321-413; these read VTPG…EDHG and THVE…VFPL. A compositionally biased stretch (low complexity) spans 387–401; sequence SSSTLKTNGSSSSVS. Over residues 402-413 the composition is skewed to polar residues; sequence CFNKNKSSVFPL.

The protein belongs to the RING-type zinc finger family. ATL subfamily.

It is found in the membrane. The enzyme catalyses S-ubiquitinyl-[E2 ubiquitin-conjugating enzyme]-L-cysteine + [acceptor protein]-L-lysine = [E2 ubiquitin-conjugating enzyme]-L-cysteine + N(6)-ubiquitinyl-[acceptor protein]-L-lysine.. It participates in protein modification; protein ubiquitination. The chain is RING-H2 finger protein ATL54 (ATL54) from Arabidopsis thaliana (Mouse-ear cress).